A 100-amino-acid chain; its full sequence is NADH-quinone oxidoreductase subunit K (100 aa).

Transmembrane regions (helical) follow at residues 4–24 (YEYY…GIII), 29–49 (IAML…FVAF), and 60–80 (VFVF…LGLI).

The protein belongs to the complex I subunit 4L family. In terms of assembly, NDH-1 is composed of 14 different subunits. Subunits NuoA, H, J, K, L, M, N constitute the membrane sector of the complex.

It localises to the cell inner membrane. It carries out the reaction a quinone + NADH + 5 H(+)(in) = a quinol + NAD(+) + 4 H(+)(out). NDH-1 shuttles electrons from NADH, via FMN and iron-sulfur (Fe-S) centers, to quinones in the respiratory chain. The immediate electron acceptor for the enzyme in this species is believed to be ubiquinone. Couples the redox reaction to proton translocation (for every two electrons transferred, four hydrogen ions are translocated across the cytoplasmic membrane), and thus conserves the redox energy in a proton gradient. The chain is NADH-quinone oxidoreductase subunit K from Persephonella marina (strain DSM 14350 / EX-H1).